The primary structure comprises 87 residues: Small ribosomal subunit protein uS15c (87 aa).

It belongs to the universal ribosomal protein uS15 family. In terms of assembly, part of the 30S ribosomal subunit.

The protein resides in the plastid. Its subcellular location is the chloroplast. This is Small ribosomal subunit protein uS15c (rps15) from Oenothera biennis (German evening primrose).